The sequence spans 348 residues: Holliday junction branch migration complex subunit RuvB (348 aa).

Positions 1 to 181 are large ATPase domain (RuvB-L); sequence MEERMITPQQ…FGVISRLEFY (181 aa). 9 residues coordinate ATP: Leu-20, Arg-21, Gly-62, Lys-65, Thr-66, Thr-67, Arg-171, Tyr-181, and Arg-218. Thr-66 contacts Mg(2+). The small ATPAse domain (RuvB-S) stretch occupies residues 182–252; sequence EVEDLIRIIT…LAGKSLDRLE (71 aa). Residues 255–348 form a head domain (RuvB-H) region; it reads PAGLDRIDQK…GDSLFDAAED (94 aa). Arg-310 and Arg-315 together coordinate DNA. The segment at 329-348 is disordered; sequence VNSSHQEGGQGDSLFDAAED.

This sequence belongs to the RuvB family. As to quaternary structure, homohexamer. Forms an RuvA(8)-RuvB(12)-Holliday junction (HJ) complex. HJ DNA is sandwiched between 2 RuvA tetramers; dsDNA enters through RuvA and exits via RuvB. An RuvB hexamer assembles on each DNA strand where it exits the tetramer. Each RuvB hexamer is contacted by two RuvA subunits (via domain III) on 2 adjacent RuvB subunits; this complex drives branch migration. In the full resolvosome a probable DNA-RuvA(4)-RuvB(12)-RuvC(2) complex forms which resolves the HJ.

The protein resides in the cytoplasm. It carries out the reaction ATP + H2O = ADP + phosphate + H(+). In terms of biological role, the RuvA-RuvB-RuvC complex processes Holliday junction (HJ) DNA during genetic recombination and DNA repair, while the RuvA-RuvB complex plays an important role in the rescue of blocked DNA replication forks via replication fork reversal (RFR). RuvA specifically binds to HJ cruciform DNA, conferring on it an open structure. The RuvB hexamer acts as an ATP-dependent pump, pulling dsDNA into and through the RuvAB complex. RuvB forms 2 homohexamers on either side of HJ DNA bound by 1 or 2 RuvA tetramers; 4 subunits per hexamer contact DNA at a time. Coordinated motions by a converter formed by DNA-disengaged RuvB subunits stimulates ATP hydrolysis and nucleotide exchange. Immobilization of the converter enables RuvB to convert the ATP-contained energy into a lever motion, pulling 2 nucleotides of DNA out of the RuvA tetramer per ATP hydrolyzed, thus driving DNA branch migration. The RuvB motors rotate together with the DNA substrate, which together with the progressing nucleotide cycle form the mechanistic basis for DNA recombination by continuous HJ branch migration. Branch migration allows RuvC to scan DNA until it finds its consensus sequence, where it cleaves and resolves cruciform DNA. The sequence is that of Holliday junction branch migration complex subunit RuvB from Desulfitobacterium hafniense (strain DSM 10664 / DCB-2).